A 166-amino-acid polypeptide reads, in one-letter code: CDP-archaeol synthase (166 aa).

A run of 4 helical transmembrane segments spans residues isoleucine 39–alanine 59, isoleucine 61–isoleucine 81, glutamate 104–phenylalanine 124, and isoleucine 127–leucine 147.

It belongs to the CDP-archaeol synthase family. Requires Mg(2+) as cofactor.

Its subcellular location is the cell membrane. The enzyme catalyses 2,3-bis-O-(geranylgeranyl)-sn-glycerol 1-phosphate + CTP + H(+) = CDP-2,3-bis-O-(geranylgeranyl)-sn-glycerol + diphosphate. The protein operates within membrane lipid metabolism; glycerophospholipid metabolism. Functionally, catalyzes the formation of CDP-2,3-bis-(O-geranylgeranyl)-sn-glycerol (CDP-archaeol) from 2,3-bis-(O-geranylgeranyl)-sn-glycerol 1-phosphate (DGGGP) and CTP. This reaction is the third ether-bond-formation step in the biosynthesis of archaeal membrane lipids. In Methanospirillum hungatei JF-1 (strain ATCC 27890 / DSM 864 / NBRC 100397 / JF-1), this protein is CDP-archaeol synthase.